The primary structure comprises 121 residues: Large ribosomal subunit protein uL24 (121 aa).

The disordered stretch occupies residues 1–23 (MVRIESSQPRKQRKARYDAPSHM).

This sequence belongs to the universal ribosomal protein uL24 family. Part of the 50S ribosomal subunit.

Functionally, one of two assembly initiator proteins, it binds directly to the 5'-end of the 23S rRNA, where it nucleates assembly of the 50S subunit. Located at the polypeptide exit tunnel on the outside of the subunit. This chain is Large ribosomal subunit protein uL24, found in Methanoregula boonei (strain DSM 21154 / JCM 14090 / 6A8).